The sequence spans 207 residues: MIGIIDYGMGNLHSVSKALERLAIPYFISSDGEELAKAKALILPGVGAFPDAMNILTQTNVQPFLDNWVAENKPLLGICLGMQLLFESSNEHQPTAGLGYLPGRVERFSGTTAEGHAYKVPHMGWNKLEFHRPTPLTEGVPDGYVYFVHSYVVRTETDIVVASSDYYQSVPAIVQKGQVYGMQFHPEKSSTVGMALLKRFGQLVEGN.

The Glutamine amidotransferase type-1 domain occupies 1 to 207; that stretch reads MIGIIDYGMG…KRFGQLVEGN (207 aa). Catalysis depends on cysteine 79, which acts as the Nucleophile. Residues histidine 185 and glutamate 187 contribute to the active site.

In terms of assembly, heterodimer of HisH and HisF.

The protein resides in the cytoplasm. It carries out the reaction 5-[(5-phospho-1-deoxy-D-ribulos-1-ylimino)methylamino]-1-(5-phospho-beta-D-ribosyl)imidazole-4-carboxamide + L-glutamine = D-erythro-1-(imidazol-4-yl)glycerol 3-phosphate + 5-amino-1-(5-phospho-beta-D-ribosyl)imidazole-4-carboxamide + L-glutamate + H(+). The catalysed reaction is L-glutamine + H2O = L-glutamate + NH4(+). Its pathway is amino-acid biosynthesis; L-histidine biosynthesis; L-histidine from 5-phospho-alpha-D-ribose 1-diphosphate: step 5/9. In terms of biological role, IGPS catalyzes the conversion of PRFAR and glutamine to IGP, AICAR and glutamate. The HisH subunit catalyzes the hydrolysis of glutamine to glutamate and ammonia as part of the synthesis of IGP and AICAR. The resulting ammonia molecule is channeled to the active site of HisF. In Shouchella clausii (strain KSM-K16) (Alkalihalobacillus clausii), this protein is Imidazole glycerol phosphate synthase subunit HisH.